The primary structure comprises 170 residues: Photosystem I assembly protein Ycf3 (170 aa).

3 TPR repeats span residues 35 to 68 (AFTYYRDGMLAQSEGNYAEALQNYYEAMRLEIDP), 72 to 105 (SYILYNIGLIHTSNGEHTKALEYYFRALERNPFL), and 120 to 153 (GEQAILQGDSEIAEAWFDQAAEYWKQAIALTPGN).

Belongs to the Ycf3 family.

It is found in the plastid. The protein resides in the chloroplast thylakoid membrane. Essential for the assembly of the photosystem I (PSI) complex. May act as a chaperone-like factor to guide the assembly of the PSI subunits. The chain is Photosystem I assembly protein Ycf3 from Oryza sativa (Rice).